Reading from the N-terminus, the 392-residue chain is MEVVAGCYEQVLFGFAVHPEPVGDGHRERWAPVADFTHHAHTASLSAVAVNSRFVVTGSKDETIHIYDMKKKVDHGALMHHNGTITCLKFHGNRHLISGAEDGLICVWDARRWECLKSIRAHKGHVTFLSIHPSGRLALSVGTDKTLRTWNLVEGRSAFIKNIKQSAHIVEWSPKGEKYVVVILNRIDVYQLDTASVSGTITNERRVSSVTFLSESVLTVAGDEEVVRFFDCDSLTCLSEFKAHENRVKDMFSFETPEHHVLVTASSDGFIKMWKLKQDKKVSPSLLCEINTNARLTCLGVWLDRRTDTKESPPAAAEPAPVSKEQSRRNKEESGHAVQEEEKQPKPDTEKCSLTGDSNKPTRGNSLVSAKKRKTVEMLEKKRKKKKIRMMQ.

5 WD repeats span residues 40 to 77 (AHTA…DHGA), 80 to 118 (HHNG…CLKS), 121 to 160 (AHKG…SAFI), 202 to 240 (TNER…CLSE), and 243 to 284 (AHEN…KVSP). The interval 309–392 (TKESPPAAAE…RKKKKIRMMQ (84 aa)) is disordered. Residues 325–351 (EQSRRNKEESGHAVQEEEKQPKPDTEK) are compositionally biased toward basic and acidic residues. Polar residues predominate over residues 355–368 (TGDSNKPTRGNSLV). The segment covering 381-392 (KKRKKKKIRMMQ) has biased composition (basic residues).

In terms of assembly, interacts with PAK1.

The protein localises to the nucleus. It localises to the nucleolus. Its function is as follows. Negatively regulates the PAK1 kinase. PAK1 is a member of the PAK kinase family, which has been shown to play a positive role in the regulation of signaling pathways involving MAPK8 and RELA. PAK1 exists as an inactive homodimer, which is activated by binding of small GTPases such as CDC42 to an N-terminal regulatory domain. PAK1IP1 also binds to the N-terminus of PAK1, and inhibits the specific activation of PAK1 by CDC42. May be involved in ribosomal large subunit assembly. This chain is p21-activated protein kinase-interacting protein 1 (PAK1IP1), found in Bos taurus (Bovine).